Here is a 149-residue protein sequence, read N- to C-terminus: Small ribosomal subunit protein bS6 (149 aa).

A disordered region spans residues 93–149; that stretch reads VGKHEEGPSAMMQKRDRDDRPRRDGDRPDRGGFGDRGPRPDRGDRDDRPRRPREDRA. The span at 94–149 shows a compositional bias: basic and acidic residues; the sequence is GKHEEGPSAMMQKRDRDDRPRRDGDRPDRGGFGDRGPRPDRGDRDDRPRRPREDRA.

This sequence belongs to the bacterial ribosomal protein bS6 family.

Its function is as follows. Binds together with bS18 to 16S ribosomal RNA. This is Small ribosomal subunit protein bS6 from Rhizobium meliloti (strain 1021) (Ensifer meliloti).